Reading from the N-terminus, the 410-residue chain is Metacaspase-1B (410 aa).

The tract at residues 1-106 (MYHRNSAPPP…SFGKGAPSNY (106 aa)) is disordered. Pro residues-rich tracts occupy residues 7-23 (APPPPGWSGGYPPPQSQ) and 32-52 (PPYPPQGPPPPPAHSYSPPPT). Residues H201 and C257 contribute to the active site.

This sequence belongs to the peptidase C14B family.

Involved in cell death (apoptosis). The polypeptide is Metacaspase-1B (casB) (Aspergillus clavatus (strain ATCC 1007 / CBS 513.65 / DSM 816 / NCTC 3887 / NRRL 1 / QM 1276 / 107)).